The following is an 814-amino-acid chain: E3 ubiquitin-protein ligase TRIM71 (814 aa).

The segment at 12 to 76 (CPLCKEMCVS…SLQLRCPVCD (65 aa)) adopts an RING-type zinc-finger fold. The tract at residues 111–146 (QQQSNGGRTASNRQRSASCSSSGLLRRAPPSQSEPR) is disordered. The segment covering 120 to 138 (ASNRQRSASCSSSGLLRRA) has biased composition (low complexity). Residues 142–189 (QSEPRCSSCDDGNGASSHCLDCQENLCDNCLRAHQRVRLTKDHFIERF) form a B box-type 1; atypical zinc finger. Residues C147, C150, C171, H175, C224, H227, C247, and H252 each contribute to the Zn(2+) site. Residues 219 to 260 (PERLYCQQHDEEVLHFYCDSCSVPICRECTMGRHAGHSFVYL) form a B box-type 2 zinc finger. Residues 282–370 (RQAIQLSLEQ…INAVQQVLEE (89 aa)) are a coiled coil. A Filamin repeat occupies 425 to 526 (SSGAFAALTK…IENSPFKVNV (102 aa)). NHL repeat units follow at residues 539 to 582 (TLSF…FKPC), 586 to 629 (HHKF…FTFE), 633 to 676 (LLKF…FGPD), 680 to 723 (LNKY…IKPD), 727 to 770 (AHFL…FEPN), and 774 to 814 (LCKF…ILAF).

Belongs to the TRIM/RBCC family.

It localises to the cytoplasm. It is found in the P-body. It carries out the reaction S-ubiquitinyl-[E2 ubiquitin-conjugating enzyme]-L-cysteine + [acceptor protein]-L-lysine = [E2 ubiquitin-conjugating enzyme]-L-cysteine + N(6)-ubiquitinyl-[acceptor protein]-L-lysine.. It functions in the pathway protein modification; protein ubiquitination. In terms of biological role, E3 ubiquitin-protein ligase that cooperates with the microRNAs (miRNAs) machinery and promotes embryonic stem cells proliferation and maintenance. Binds to miRNAs and participates in post-transcriptional repression of transcripts. Required to maintain proliferation and prevent premature differentiation of neural progenitor cells during early neural development. The chain is E3 ubiquitin-protein ligase TRIM71 (trim71) from Xenopus tropicalis (Western clawed frog).